The following is a 422-amino-acid chain: Serpin A11 (422 aa).

The signal sequence occupies residues 1–24 (MGPVWLWLLIAELLLPVHYQPSSA). A disordered region spans residues 25 to 45 (HGDKSLGAPQPASHQSLEPAP). Asn-106, Asn-169, Asn-350, and Asn-385 each carry an N-linked (GlcNAc...) asparagine glycan.

Belongs to the serpin family.

Its subcellular location is the secreted. The polypeptide is Serpin A11 (Serpina11) (Rattus norvegicus (Rat)).